Here is a 323-residue protein sequence, read N- to C-terminus: tRNA uridine(34) hydroxylase (323 aa).

One can recognise a Rhodanese domain in the interval 127 to 221 (QDENTVVLDA…YGQDPEVQGD (95 aa)). The active-site Cysteine persulfide intermediate is the C181.

The protein belongs to the TrhO family.

It carries out the reaction uridine(34) in tRNA + AH2 + O2 = 5-hydroxyuridine(34) in tRNA + A + H2O. In terms of biological role, catalyzes oxygen-dependent 5-hydroxyuridine (ho5U) modification at position 34 in tRNAs. This chain is tRNA uridine(34) hydroxylase, found in Oceanobacillus iheyensis (strain DSM 14371 / CIP 107618 / JCM 11309 / KCTC 3954 / HTE831).